A 268-amino-acid chain; its full sequence is Phosphate import ATP-binding protein PstB (268 aa).

In terms of domain architecture, ABC transporter spans 22-263; that stretch reads LAVRNLNFYY…PKQQQTQDYI (242 aa). 54–61 is an ATP binding site; it reads GPSGCGKS.

Belongs to the ABC transporter superfamily. Phosphate importer (TC 3.A.1.7) family. In terms of assembly, the complex is composed of two ATP-binding proteins (PstB), two transmembrane proteins (PstC and PstA) and a solute-binding protein (PstS).

The protein localises to the cell inner membrane. It carries out the reaction phosphate(out) + ATP + H2O = ADP + 2 phosphate(in) + H(+). Its function is as follows. Part of the ABC transporter complex PstSACB involved in phosphate import. Responsible for energy coupling to the transport system. The sequence is that of Phosphate import ATP-binding protein PstB from Gluconobacter oxydans (strain 621H) (Gluconobacter suboxydans).